We begin with the raw amino-acid sequence, 236 residues long: Phospholipid hydroperoxide glutathione peroxidase, chloroplastic (236 aa).

The transit peptide at 1 to 64 directs the protein to the chloroplast; it reads MASMAFSTTF…SNFPIVPSKT (64 aa). The active site involves cysteine 111.

This sequence belongs to the glutathione peroxidase family.

The protein localises to the plastid. It localises to the chloroplast stroma. The catalysed reaction is a hydroperoxy polyunsaturated fatty acid + 2 glutathione = a hydroxy polyunsaturated fatty acid + glutathione disulfide + H2O. Protects cells and enzymes from oxidative damage, by catalyzing the reduction of hydrogen peroxide, lipid peroxides and organic hydroperoxide, by glutathione. The polypeptide is Phospholipid hydroperoxide glutathione peroxidase, chloroplastic (Pisum sativum (Garden pea)).